Here is a 130-residue protein sequence, read N- to C-terminus: Small ribosomal subunit protein uS9 (130 aa).

This sequence belongs to the universal ribosomal protein uS9 family.

This Bacillus mycoides (strain KBAB4) (Bacillus weihenstephanensis) protein is Small ribosomal subunit protein uS9.